The sequence spans 515 residues: Probable cytosol aminopeptidase (515 aa).

Mn(2+)-binding residues include K279 and D284. K291 is a catalytic residue. Residues D302, D361, and E363 each contribute to the Mn(2+) site. Residue R365 is part of the active site.

This sequence belongs to the peptidase M17 family. Mn(2+) serves as cofactor.

The protein localises to the cytoplasm. It catalyses the reaction Release of an N-terminal amino acid, Xaa-|-Yaa-, in which Xaa is preferably Leu, but may be other amino acids including Pro although not Arg or Lys, and Yaa may be Pro. Amino acid amides and methyl esters are also readily hydrolyzed, but rates on arylamides are exceedingly low.. It carries out the reaction Release of an N-terminal amino acid, preferentially leucine, but not glutamic or aspartic acids.. Functionally, presumably involved in the processing and regular turnover of intracellular proteins. Catalyzes the removal of unsubstituted N-terminal amino acids from various peptides. The polypeptide is Probable cytosol aminopeptidase (Mycobacterium tuberculosis (strain ATCC 25177 / H37Ra)).